A 339-amino-acid polypeptide reads, in one-letter code: ADP,ATP carrier protein (339 aa).

3 Solcar repeats span residues 39–133 (MAFV…IKGL), 145–234 (RFFV…AKGV), and 246–328 (AKWA…IKKF). 5 helical membrane passes run 41-70 (FVKD…LLLQ), 110-134 (LANV…KGLF), 144-164 (WRFF…SLLI), 212-232 (VSVQ…DTAK), and 245-265 (FAKW…SYPF). 2 residues coordinate ADP: Arg115 and Lys127. Arg269 is an ADP binding site. The tract at residues 269-274 (RRRLMM) is important for transport activity. Positions 269–274 (RRRLMM) match the Nucleotide carrier signature motif motif. A helical transmembrane segment spans residues 305–322 (AWSNVLRGAGGAFVLVLY).

The protein belongs to the mitochondrial carrier (TC 2.A.29) family. Monomer.

Its subcellular location is the mitochondrion inner membrane. It carries out the reaction ADP(in) + ATP(out) = ADP(out) + ATP(in). The matrix-open state (m-state) is inhibited by the membrane-permeable bongkrekic acid (BKA). The cytoplasmic-open state (c-state) is inhibited by the membrane-impermeable toxic inhibitor carboxyatractyloside (CATR). Functionally, ADP:ATP antiporter that mediates import of ADP into the mitochondrial matrix for ATP synthesis, and export of ATP out to fuel the cell. Cycles between the cytoplasmic-open state (c-state) and the matrix-open state (m-state): operates by the alternating access mechanism with a single substrate-binding site intermittently exposed to either the cytosolic (c-state) or matrix (m-state) side of the inner mitochondrial membrane. The polypeptide is ADP,ATP carrier protein (Parachlorella kessleri (Green alga)).